The chain runs to 506 residues: MVKKNIRADEISSIIRQQIEQYNDEVTVVNVGTVFQVGDGIARIYGLDNVMAGELLEFADGTVGLALNLETKNVGAVLMGDGLTVQEGTAVRGTGKVAQIPVGEAFLGRIVNALAEPIDGKGEIQTTETRLIESNAPGIISRRSVHEPLQTGLVAVDAMIPIGRGQRELIIGDRQTGKTAIATDTILNQKGKDVICVYVAIGQKASSIAQVVNTLTERGALDYTIIVAATADSPATLQYLAPYTGAALAEYFMYTGRHTLVIYDDLSKQAQAYRQMSLLLRRPPGREAYPGDVFYLHSRLLERAAKLSDQLGSGSMTALPIVETQEGDVSAYIPTNVISITDGQIFLSADIFNSGLRPAVNVGISVSRVGSAAQLPIMKQVAGTLKLELAQFAELEGFSQFSSDLDQASQNQLARGQRLREILKQSQASPLSVPDQVASIYAGTNGFLQKLAVNQVRDFLVGLREFLDKRKPEYLEAVNSEKKLTPKVKDILNSAISEFLDEFLAS.

172–179 lines the ATP pocket; sequence GDRQTGKT.

The protein belongs to the ATPase alpha/beta chains family. In terms of assembly, F-type ATPases have 2 components, CF(1) - the catalytic core - and CF(0) - the membrane proton channel. CF(1) has five subunits: alpha(3), beta(3), gamma(1), delta(1), epsilon(1). CF(0) has four main subunits: a, b, b' and c.

Its subcellular location is the plastid. It localises to the chloroplast thylakoid membrane. It catalyses the reaction ATP + H2O + 4 H(+)(in) = ADP + phosphate + 5 H(+)(out). Its function is as follows. Produces ATP from ADP in the presence of a proton gradient across the membrane. The alpha chain is a regulatory subunit. The polypeptide is ATP synthase subunit alpha, chloroplastic (Pleurastrum terricola (Filamentous green alga)).